The primary structure comprises 282 residues: MSSYANHQALAGLTLGKSTDYRDTYDASLLQGVPRSLNRDPRGLKADNLPFHGTDIWTLYELSWLNAKGLPQVAVGHVELDYTSVNLIESKSFKLYLNSFNQTRFNNWDEVRQTLERDLSTCAQGKVSVALYRLDELEGQPIGHFNGTCIDDQDITIDNYEFTTDYLENATSGEKVVEETLVSHLLKSNCLITHQPDWGSIQIQYRGRQIDREKLLRYLVSFRHHNEFHEQCVERIFNDLLRFCQPEKLSVYARYTRRGGLDINPWRSNSDFVPSTTRLVRQ.

Position 88 to 90 (88 to 90 (IES)) interacts with substrate. 90–91 (SK) contributes to the NADPH binding site. Cysteine 190 (thioimide intermediate) is an active-site residue. Aspartate 197 functions as the Proton donor in the catalytic mechanism. 229–230 (HE) is a binding site for substrate. 258–259 (RG) is an NADPH binding site.

This sequence belongs to the GTP cyclohydrolase I family. QueF type 2 subfamily. In terms of assembly, homodimer.

It is found in the cytoplasm. It catalyses the reaction 7-aminomethyl-7-carbaguanine + 2 NADP(+) = 7-cyano-7-deazaguanine + 2 NADPH + 3 H(+). It participates in tRNA modification; tRNA-queuosine biosynthesis. Catalyzes the NADPH-dependent reduction of 7-cyano-7-deazaguanine (preQ0) to 7-aminomethyl-7-deazaguanine (preQ1). This chain is NADPH-dependent 7-cyano-7-deazaguanine reductase, found in Escherichia coli (strain UTI89 / UPEC).